The chain runs to 93 residues: uncharacterized protein (93 aa).

This sequence to M.tuberculosis Rv1738.

This is an uncharacterized protein from Mycobacterium tuberculosis (strain CDC 1551 / Oshkosh).